Reading from the N-terminus, the 165-residue chain is Transcription antitermination protein NusB (165 aa).

The segment at 1–20 (MSDVENGGEPRQPSVKPANQ) is disordered.

Belongs to the NusB family.

Involved in transcription antitermination. Required for transcription of ribosomal RNA (rRNA) genes. Binds specifically to the boxA antiterminator sequence of the ribosomal RNA (rrn) operons. The chain is Transcription antitermination protein NusB from Agrobacterium fabrum (strain C58 / ATCC 33970) (Agrobacterium tumefaciens (strain C58)).